Here is a 522-residue protein sequence, read N- to C-terminus: Protein tweety homolog 3 (522 aa).

Topologically, residues 1–43 (MAAAISYTPPWWVNLLHRLPHLNLQWESLNGDFRPEDPDYQQS) are extracellular. A helical membrane pass occupies residues 44–64 (LMLLACVALSCLALDLLFLLF). Residues 65 to 87 (YSFWFCCRHRKTEENTNADCCCT) lie on the Cytoplasmic side of the membrane. The helical transmembrane segment at 88–108 (VWCVIVATLVCSAGIAVGFYG) threads the bilayer. The Extracellular portion of the chain corresponds to 109-211 (NGETSDGIHR…VDLFDWYRWL (103 aa)). Ca(2+)-binding residues include Glu-111 and Asp-114. 2 N-linked (GlcNAc...) asparagine glycosylation sites follow: Asn-127 and Asn-145. Residues 212–232 (GYLGLLLFHVFICLLVLFGLI) traverse the membrane as a helical segment. At 233-238 (RNSKGT) the chain is on the cytoplasmic side. A helical transmembrane segment spans residues 239-259 (LICVCFLGMMALIISWASMGL). The Extracellular segment spans residues 260-386 (ELAVAVGSSD…LTGFCYDGVE (127 aa)). 2 cysteine pairs are disulfide-bonded: Cys-271–Cys-381 and Cys-299–Cys-366. N-linked (GlcNAc...) asparagine glycosylation is present at Asn-351. Residues 387 to 407 (GLIYLVLFSFVTALMFSSIVC) form a helical membrane-spanning segment. At 408–522 (SVPHTWQQRR…TNRPETDPVH (115 aa)) the chain is on the cytoplasmic side. The tract at residues 483 to 522 (QNPRCENTPLIGRESPPPSYTSSMRAKYLATNRPETDPVH) is disordered.

This sequence belongs to the tweety family. In terms of assembly, homotetramer; disulfide-linked. Forms cis-homodimers in the presence of Ca(2+).

The protein localises to the cell membrane. The catalysed reaction is chloride(in) = chloride(out). The enzyme catalyses L-glutamate(out) = L-glutamate(in). Functionally, may act as a calcium-independent, swelling-dependent volume-regulated anion channel (VRAC-swell) which plays a pivotal role in the process of regulatory volume decrease (RVD) in the brain through the efflux of anions like chloride and organic osmolytes like glutamate. Probable large-conductance Ca(2+)-activated chloride channel. The protein is Protein tweety homolog 3 (ttyh3) of Xenopus laevis (African clawed frog).